A 57-amino-acid chain; its full sequence is Protein Ric1 (57 aa).

2 consecutive transmembrane segments (helical) span residues 8 to 28 and 34 to 54; these read IPRL…QVGC and INCL…VYIL.

The protein belongs to the UPF0057 (PMP3) family.

The protein resides in the membrane. The polypeptide is Protein Ric1 (RIC1) (Phytophthora infestans (Potato late blight agent)).